A 444-amino-acid chain; its full sequence is tRNA-2-methylthio-N(6)-dimethylallyladenosine synthase (444 aa).

The MTTase N-terminal domain maps to R3 to R117. Residues C12, C48, C80, C155, C159, and C162 each contribute to the [4Fe-4S] cluster site. Residues A141 to N374 form the Radical SAM core domain. Positions K375–S441 constitute a TRAM domain.

This sequence belongs to the methylthiotransferase family. MiaB subfamily. As to quaternary structure, monomer. The cofactor is [4Fe-4S] cluster.

It is found in the cytoplasm. The enzyme catalyses N(6)-dimethylallyladenosine(37) in tRNA + (sulfur carrier)-SH + AH2 + 2 S-adenosyl-L-methionine = 2-methylsulfanyl-N(6)-dimethylallyladenosine(37) in tRNA + (sulfur carrier)-H + 5'-deoxyadenosine + L-methionine + A + S-adenosyl-L-homocysteine + 2 H(+). Catalyzes the methylthiolation of N6-(dimethylallyl)adenosine (i(6)A), leading to the formation of 2-methylthio-N6-(dimethylallyl)adenosine (ms(2)i(6)A) at position 37 in tRNAs that read codons beginning with uridine. The polypeptide is tRNA-2-methylthio-N(6)-dimethylallyladenosine synthase (Anaplasma phagocytophilum (strain HZ)).